The following is a 185-amino-acid chain: Small ribosomal subunit protein uS7 (185 aa).

This sequence belongs to the universal ribosomal protein uS7 family. Part of the 30S ribosomal subunit.

Its function is as follows. One of the primary rRNA binding proteins, it binds directly to 16S rRNA where it nucleates assembly of the head domain of the 30S subunit. Is located at the subunit interface close to the decoding center. This is Small ribosomal subunit protein uS7 from Methanosarcina barkeri (strain Fusaro / DSM 804).